Reading from the N-terminus, the 354-residue chain is Caffeate O-methyltransferase-like protein 2 (354 aa).

The S-adenosyl-L-homocysteine site is built by Gly-198, Asp-221, Met-242, and Lys-255. His-259 serves as the catalytic Proton acceptor. Active-site residues include Glu-287 and Glu-319.

This sequence belongs to the class I-like SAM-binding methyltransferase superfamily. Cation-independent O-methyltransferase family. COMT subfamily.

This is Caffeate O-methyltransferase-like protein 2 from Oryza sativa subsp. japonica (Rice).